A 330-amino-acid polypeptide reads, in one-letter code: Methionyl-tRNA formyltransferase (330 aa).

(6S)-5,6,7,8-tetrahydrofolate is bound at residue 112 to 115 (SLLP).

The protein belongs to the Fmt family.

The catalysed reaction is L-methionyl-tRNA(fMet) + (6R)-10-formyltetrahydrofolate = N-formyl-L-methionyl-tRNA(fMet) + (6S)-5,6,7,8-tetrahydrofolate + H(+). In terms of biological role, attaches a formyl group to the free amino group of methionyl-tRNA(fMet). The formyl group appears to play a dual role in the initiator identity of N-formylmethionyl-tRNA by promoting its recognition by IF2 and preventing the misappropriation of this tRNA by the elongation apparatus. The protein is Methionyl-tRNA formyltransferase of Synechocystis sp. (strain ATCC 27184 / PCC 6803 / Kazusa).